Reading from the N-terminus, the 450-residue chain is MDSTFNELGVSPALIATLKDNNINQPTTIQQLAIPQFLQHQNLIVHSPTGTGKTAVFGIPVIETLLKKPSKGTTQTLVVAPTRELAEQIKTTFINFAKHTHLKVVSLIGGIPIWQQLKQLENQPEIVVGTMGRVMDLLERGVIKFEHLEHLIIDEVDLMLDRGFKRKLFDLLSRIEKFEQIAVYSASYNEETIETAKQITKNGIFLAAPELKQNAPEPDNKLIDQFVCYLFSNRKKQALYSLVSQTRAKSIIVFCDTKKLVDELCIFLRKNDVKTYPLHGDKAQFIRERNLKLFANTTAPIVLVTTDLIGRGIHVEGVDMVVNYSACVNFETYLHRMGRTGRNNHKGSCITFCTSHEKQAFLKLLEQVNDKRISPLRPMRLRLIPLKCKTQPKKGKLSLQSVQKIYVNPRSNGTFKRVPLAGDLFKSRMRQPERDMQKNKLHDSDWQSNM.

The Q motif motif lies at 3–31; that stretch reads STFNELGVSPALIATLKDNNINQPTTIQQ. The Helicase ATP-binding domain maps to 34-206; that stretch reads IPQFLQHQNL…KQITKNGIFL (173 aa). Residue 47-54 coordinates ATP; sequence SPTGTGKT. The DEVD box motif lies at 154 to 157; the sequence is DEVD. A Helicase C-terminal domain is found at 234–384; the sequence is RKKQALYSLV…PLRPMRLRLI (151 aa). The interval 429 to 450 is disordered; the sequence is MRQPERDMQKNKLHDSDWQSNM. Residues 430 to 450 are compositionally biased toward basic and acidic residues; that stretch reads RQPERDMQKNKLHDSDWQSNM.

The protein belongs to the DEAD box helicase family.

The enzyme catalyses ATP + H2O = ADP + phosphate + H(+). The chain is Probable ATP-dependent RNA helicase MG425 homolog from Mycoplasma pneumoniae (strain ATCC 29342 / M129 / Subtype 1) (Mycoplasmoides pneumoniae).